We begin with the raw amino-acid sequence, 930 residues long: RNA-binding protein 10 (930 aa).

2 stretches are compositionally biased toward basic and acidic residues: residues 1–14 (MEYERRGGRGDRTG) and 21–45 (RSQDDGGENRSRDHDYRDMDYRSYP). The segment at 1-127 (MEYERRGGRG…EEDEEEEEKA (127 aa)) is disordered. N-acetylserine is present on Glu2. Residues Arg30, Ser61, and Ser89 each carry the phosphoserine modification. Residues 59–70 (DSSEEQSAEDSY) show a composition bias toward acidic residues. A compositionally biased stretch (basic residues) spans 80 to 89 (RRRRRRHRHS). The span at 98–111 (RDGDYRDQDYRTEQ) shows a compositional bias: basic and acidic residues. Over residues 112-125 (GEEEEEEEDEEEEE) the composition is skewed to acidic residues. One can recognise an RRM 1 domain in the interval 129–209 (NIVMLRMLPQ…QKVSMHYSDP (81 aa)). The segment at 212–242 (KINEDWLCNKCGVQNFKRREKCFKCGVPKSE) adopts a RanBP2-type zinc-finger fold. The 85-residue stretch at 300–384 (DTIILRNLNP…KTINVEFAKG (85 aa)) folds into the RRM 2 domain. At Lys383 the chain carries N6-acetyllysine. 4 disordered regions span residues 466–524 (PGIT…AANS), 537–569 (SELQSPTHPSSALPPATSPTAQESYSQYPVPDV), 620–685 (EQSA…DERR), and 700–753 (KGAL…EEKL). The span at 508-524 (YQQSAEASSSQGTAANS) shows a compositional bias: polar residues. A compositionally biased stretch (low complexity) spans 541–557 (SPTHPSSALPPATSPTA). Basic and acidic residues-rich tracts occupy residues 623–639 (ADGHKETGAPSKEGKEK), 653–669 (KDMERWARSLNKQKENF), and 700–709 (KGALAERQHT). Ser718, Ser723, Ser733, Ser736, and Ser738 each carry phosphoserine. Residues 743-753 (ERGGPEREEKL) show a composition bias toward basic and acidic residues. The C2H2-type; atypical zinc-finger motif lies at 759–784 (LACLLCRRQFPSKEALIRHQQLSGLH). 2 positions are modified to phosphoserine: Ser781 and Ser797. Residues 815–826 (RDRAAERREKYG) are compositionally biased toward basic and acidic residues. Residues 815 to 861 (RDRAAERREKYGIPEPPEPKRRKYGGISTASVDFEQPTRDGLGSDNI) are disordered. Phosphoserine is present on Ser845. The region spanning 858–904 (SDNIGSRMLQAMGWKEGSGLGRKKQGIVTPIEAQTRVRGSGLGARGS) is the G-patch domain. An Omega-N-methylarginine modification is found at Arg902.

Associates with the spliceosome. Component of a large chromatin remodeling complex, at least composed of MYSM1, PCAF, RBM10 and KIF11/TRIP5.

It localises to the nucleus. Its function is as follows. Binds to ssRNA containing the consensus sequence 5'-AGGUAA-3'. May be involved in post-transcriptional processing, most probably in mRNA splicing. Binds to RNA homopolymers, with a preference for poly(G) and poly(U) and little for poly(A). May bind to specific miRNA hairpins. This is RNA-binding protein 10 from Homo sapiens (Human).